The sequence spans 101 residues: Protein translation factor SUI1 homolog (101 aa).

This sequence belongs to the SUI1 family.

The polypeptide is Protein translation factor SUI1 homolog (Methanothermobacter thermautotrophicus (strain ATCC 29096 / DSM 1053 / JCM 10044 / NBRC 100330 / Delta H) (Methanobacterium thermoautotrophicum)).